A 226-amino-acid polypeptide reads, in one-letter code: Enolase-phosphatase E1 (226 aa).

The protein belongs to the HAD-like hydrolase superfamily. MasA/MtnC family. In terms of assembly, monomer. It depends on Mg(2+) as a cofactor.

The enzyme catalyses 5-methylsulfanyl-2,3-dioxopentyl phosphate + H2O = 1,2-dihydroxy-5-(methylsulfanyl)pent-1-en-3-one + phosphate. The protein operates within amino-acid biosynthesis; L-methionine biosynthesis via salvage pathway; L-methionine from S-methyl-5-thio-alpha-D-ribose 1-phosphate: step 3/6. Its pathway is amino-acid biosynthesis; L-methionine biosynthesis via salvage pathway; L-methionine from S-methyl-5-thio-alpha-D-ribose 1-phosphate: step 4/6. Functionally, bifunctional enzyme that catalyzes the enolization of 2,3-diketo-5-methylthiopentyl-1-phosphate (DK-MTP-1-P) into the intermediate 2-hydroxy-3-keto-5-methylthiopentenyl-1-phosphate (HK-MTPenyl-1-P), which is then dephosphorylated to form the acireductone 1,2-dihydroxy-3-keto-5-methylthiopentene (DHK-MTPene). In Shewanella sp. (strain MR-4), this protein is Enolase-phosphatase E1.